The chain runs to 247 residues: Caffeoyl-CoA O-methyltransferase (247 aa).

Lysine 21 provides a ligand contact to substrate. S-adenosyl-L-methionine contacts are provided by residues threonine 63, glutamate 85, 87 to 88 (GV), serine 93, aspartate 111, and alanine 140. Aspartate 163 serves as a coordination point for substrate. Position 163 (aspartate 163) interacts with a divalent metal cation. Aspartate 165 provides a ligand contact to S-adenosyl-L-methionine. The a divalent metal cation site is built by aspartate 189 and asparagine 190. Asparagine 194 is a substrate binding site.

It belongs to the class I-like SAM-binding methyltransferase superfamily. Cation-dependent O-methyltransferase family. CCoAMT subfamily. Homodimer. Ca(2+) is required as a cofactor. Requires Mg(2+) as cofactor. It depends on Zn(2+) as a cofactor.

The catalysed reaction is (E)-caffeoyl-CoA + S-adenosyl-L-methionine = (E)-feruloyl-CoA + S-adenosyl-L-homocysteine + H(+). Its pathway is aromatic compound metabolism; phenylpropanoid biosynthesis. Methylates caffeoyl-CoA to feruloyl-CoA and 5-hydroxyferuloyl-CoA to sinapoyl-CoA. Plays a role in the synthesis of feruloylated polysaccharides. Involved in the reinforcement of the plant cell wall. Also involved in the responding to wounding or pathogen challenge by the increased formation of cell wall-bound ferulic acid polymers. The chain is Caffeoyl-CoA O-methyltransferase (CCOMT) from Medicago sativa (Alfalfa).